Consider the following 363-residue polypeptide: 3-isopropylmalate dehydrogenase (363 aa).

78 to 91 (GPKWEHLPPDQQPE) serves as a coordination point for NAD(+). Residues Arg99, Arg109, Arg138, and Asp227 each coordinate substrate. Asp227, Asp251, and Asp255 together coordinate Mg(2+). NAD(+) is bound at residue 285 to 297 (GSAPDITGKNIAN).

It belongs to the isocitrate and isopropylmalate dehydrogenases family. LeuB type 1 subfamily. In terms of assembly, homodimer. Mg(2+) is required as a cofactor. Mn(2+) serves as cofactor.

Its subcellular location is the cytoplasm. It catalyses the reaction (2R,3S)-3-isopropylmalate + NAD(+) = 4-methyl-2-oxopentanoate + CO2 + NADH. The protein operates within amino-acid biosynthesis; L-leucine biosynthesis; L-leucine from 3-methyl-2-oxobutanoate: step 3/4. In terms of biological role, catalyzes the oxidation of 3-carboxy-2-hydroxy-4-methylpentanoate (3-isopropylmalate) to 3-carboxy-4-methyl-2-oxopentanoate. The product decarboxylates to 4-methyl-2 oxopentanoate. This chain is 3-isopropylmalate dehydrogenase, found in Shigella boydii serotype 4 (strain Sb227).